The following is a 1295-amino-acid chain: Phosphoribosylformylglycinamidine synthase (1295 aa).

Residues 305 to 327 are disordered; sequence WPGAATGSGGEIRDEGATGRGAK. ATP-binding positions include 307–318, 386–388, and alanine 678; these read GAATGSGGEIRD and TGY. Mg(2+) is bound by residues aspartate 679, glutamate 718, asparagine 722, and aspartate 884. Serine 886 lines the ATP pocket. The 254-residue stretch at 1042-1295 folds into the Glutamine amidotransferase type-1 domain; that stretch reads VAVLREQGVN…IFRNARKQLG (254 aa). The Nucleophile role is filled by cysteine 1135. Residues histidine 1260 and glutamate 1262 contribute to the active site.

It in the N-terminal section; belongs to the FGAMS family. In terms of assembly, monomer.

Its subcellular location is the cytoplasm. The catalysed reaction is N(2)-formyl-N(1)-(5-phospho-beta-D-ribosyl)glycinamide + L-glutamine + ATP + H2O = 2-formamido-N(1)-(5-O-phospho-beta-D-ribosyl)acetamidine + L-glutamate + ADP + phosphate + H(+). The protein operates within purine metabolism; IMP biosynthesis via de novo pathway; 5-amino-1-(5-phospho-D-ribosyl)imidazole from N(2)-formyl-N(1)-(5-phospho-D-ribosyl)glycinamide: step 1/2. Functionally, phosphoribosylformylglycinamidine synthase involved in the purines biosynthetic pathway. Catalyzes the ATP-dependent conversion of formylglycinamide ribonucleotide (FGAR) and glutamine to yield formylglycinamidine ribonucleotide (FGAM) and glutamate. This is Phosphoribosylformylglycinamidine synthase from Salmonella typhi.